A 186-amino-acid chain; its full sequence is MKVKEVAQKIEPKMKKTIEAFQHEIASIRTGKATTTLLDRVKVEAYGQLMPLKQVGNIGVMDVHTLIVQVWDKSMVSATERAIRDANLGLNPSADGQNIRVSIPPLTEERRKEFVKLTKKFGEDSKVSLRNLRRDMIHDIEKLEKDKAISEDDKNRGKKEADDLLHKFEKQLSDLIALKEKEIMEV.

Belongs to the RRF family.

It is found in the cytoplasm. Responsible for the release of ribosomes from messenger RNA at the termination of protein biosynthesis. May increase the efficiency of translation by recycling ribosomes from one round of translation to another. The chain is Ribosome-recycling factor from Chlorobium limicola (strain DSM 245 / NBRC 103803 / 6330).